A 160-amino-acid chain; its full sequence is Transcriptional repressor NrdR (160 aa).

A zinc finger lies at 3–34 (CPYCQYEDTQVKDSRPVEEGAVIRRRRVCPVC). An ATP-cone domain is found at 49 to 139 (LLVSKKSGRC…VYRDFRNASD (91 aa)).

This sequence belongs to the NrdR family. Zn(2+) is required as a cofactor.

Negatively regulates transcription of bacterial ribonucleotide reductase nrd genes and operons by binding to NrdR-boxes. This chain is Transcriptional repressor NrdR, found in Bartonella quintana (strain Toulouse) (Rochalimaea quintana).